The chain runs to 318 residues: MARHKIVLIGSGYVGSAFAHAIVAKGLVDEMAIIDIDEDKAKADVWDLNHATPFGDNFVNVHVGQYEDFKDADIVVICASAKLAKGETRLKLLEDNVDIFVPMIQRIVDSGFDGYFVLPSNPVDIMSYVVKRVSNFPKNKIIGSGTSLDTARFQFFLSREFDVAPNQVYAPIIGEHGDSQVAVWSHAQIAGEPVLDLLPSNTNLEAFKTSISNRTTQIGYDIYVRKGTTNFGISLSLVRIVEAILFNKNIIMNVSSYVEGEYGLSDVYIGVPTVINRNGADRIIELALSKEELSQLHHSADIILDYQRQADAIIDQMC.

Residues V14, D35, K40, and Y66 each coordinate NAD(+). Substrate-binding positions include R89 and 121-124 (NPVD). S144 contacts NAD(+). Residue 149-152 (DTAR) participates in substrate binding. H176 acts as the Proton acceptor in catalysis. The residue at position 220 (Y220) is a Phosphotyrosine. T229 lines the substrate pocket.

The protein belongs to the LDH/MDH superfamily. LDH family. In terms of assembly, homotetramer.

The protein resides in the cytoplasm. The catalysed reaction is (S)-lactate + NAD(+) = pyruvate + NADH + H(+). The protein operates within fermentation; pyruvate fermentation to lactate; (S)-lactate from pyruvate: step 1/1. Catalyzes the conversion of lactate to pyruvate. This is L-lactate dehydrogenase from Staphylococcus haemolyticus (strain JCSC1435).